Here is a 627-residue protein sequence, read N- to C-terminus: Phosphomethylpyrimidine synthase (627 aa).

The segment at 1-21 is disordered; it reads MSVQSNKNLSESAQVDQQSIQ. Residues Asn-231, Met-260, Tyr-289, His-325, 345–347, 386–389, and Glu-425 contribute to the substrate site; these read SRG and DGLR. His-429 contributes to the Zn(2+) binding site. Tyr-452 provides a ligand contact to substrate. Zn(2+) is bound at residue His-493. Positions 573, 576, and 581 each coordinate [4Fe-4S] cluster.

This sequence belongs to the ThiC family. As to quaternary structure, homodimer. [4Fe-4S] cluster serves as cofactor.

It carries out the reaction 5-amino-1-(5-phospho-beta-D-ribosyl)imidazole + S-adenosyl-L-methionine = 4-amino-2-methyl-5-(phosphooxymethyl)pyrimidine + CO + 5'-deoxyadenosine + formate + L-methionine + 3 H(+). The protein operates within cofactor biosynthesis; thiamine diphosphate biosynthesis. Catalyzes the synthesis of the hydroxymethylpyrimidine phosphate (HMP-P) moiety of thiamine from aminoimidazole ribotide (AIR) in a radical S-adenosyl-L-methionine (SAM)-dependent reaction. The sequence is that of Phosphomethylpyrimidine synthase from Stutzerimonas stutzeri (strain A1501) (Pseudomonas stutzeri).